We begin with the raw amino-acid sequence, 195 residues long: CASP-like protein 1B1 (195 aa).

Topologically, residues 1 to 25 (MDLEKGKKPSEQAAACRIMQVKDKL) are cytoplasmic. A helical transmembrane segment spans residues 26-46 (ITLQPVVRACVFLATAVAAVI). Over 47 to 78 (MGLNKQSYTTVVAIVGTRPVTQTFTAKFKDTP) the chain is Extracellular. A helical transmembrane segment spans residues 79-99 (AFVFFVIANAIASGYNLMVLV). Over 100 to 114 (TRRILQRRAQSLSVH) the chain is Cytoplasmic. A helical membrane pass occupies residues 115-135 (LLDMVILTLLATGSATAASMA). The Extracellular segment spans residues 136–160 (QLGKNGNLHARWNPICDKFGSFCNH). The helical transmembrane segment at 161 to 181 (GGIALMSSFIGVALMLALNLL) threads the bilayer. Topologically, residues 182–195 (SAAANSPRSNVTGQ) are cytoplasmic.

The protein belongs to the Casparian strip membrane proteins (CASP) family. In terms of assembly, homodimer and heterodimers.

The protein localises to the cell membrane. The polypeptide is CASP-like protein 1B1 (Oryza sativa subsp. indica (Rice)).